Here is a 463-residue protein sequence, read N- to C-terminus: Gamma-aminobutyric acid receptor subunit alpha-5 (463 aa).

The N-terminal stretch at methionine 1–serine 25 is a signal peptide. The Extracellular portion of the chain corresponds to serine 26–phenylalanine 260. An N-linked (GlcNAc...) asparagine glycan is attached at asparagine 45. Residue arginine 101 participates in 4-aminobutanoate binding. Asparagine 145 is a glycosylation site (N-linked (GlcNAc...) asparagine). Position 164 (threonine 164) interacts with 4-aminobutanoate. An intrachain disulfide couples cysteine 173 to cysteine 187. Asparagine 207 and asparagine 236 each carry an N-linked (GlcNAc...) asparagine glycan. A run of 3 helical transmembrane segments spans residues valine 261 to leucine 281, proline 287 to arginine 308, and alanine 319 to threonine 340. Over valine 341–lysine 428 the chain is Cytoplasmic. Residue lysine 355 forms a Glycyl lysine isopeptide (Lys-Gly) (interchain with G-Cter in ubiquitin) linkage. A disordered region spans residues proline 387–alanine 408. The chain crosses the membrane as a helical span at residues methionine 429 to tyrosine 449.

The protein belongs to the ligand-gated ion channel (TC 1.A.9) family. Gamma-aminobutyric acid receptor (TC 1.A.9.5) subfamily. GABRA5 sub-subfamily. In terms of assembly, heteropentamer, formed by a combination of alpha (GABRA1-6), beta (GABRB1-3), gamma (GABRG1-3), delta (GABRD), epsilon (GABRE), rho (GABRR1-3), pi (GABRP) and theta (GABRQ) chains, each subunit exhibiting distinct physiological and pharmacological properties. Expressed in brain, in hippocampal pyramidal neurons.

It localises to the postsynaptic cell membrane. The protein resides in the cell membrane. It carries out the reaction chloride(in) = chloride(out). Alpha subunit of the heteropentameric ligand-gated chloride channel gated by gamma-aminobutyric acid (GABA), a major inhibitory neurotransmitter in the brain. GABA-gated chloride channels, also named GABA(A) receptors (GABAAR), consist of five subunits arranged around a central pore and contain GABA active binding site(s) located at the alpha and beta subunit interface(s). When activated by GABA, GABAARs selectively allow the flow of chloride anions across the cell membrane down their electrochemical gradient. GABAARs containing alpha-5/GABRA5 are mainly extrasynaptic and contribute to the tonic GABAergic inhibition of the hippocampus. Extrasynaptic alpha-5-containing GABAARs in CA1 pyramidal neurons play a role in learning and memory processes. This is Gamma-aminobutyric acid receptor subunit alpha-5 from Mus musculus (Mouse).